Reading from the N-terminus, the 858-residue chain is DNA mismatch repair protein MutS (858 aa).

603–610 contacts ATP; that stretch reads GPNMSGKS.

Belongs to the DNA mismatch repair MutS family.

Functionally, this protein is involved in the repair of mismatches in DNA. It is possible that it carries out the mismatch recognition step. This protein has a weak ATPase activity. In Streptococcus agalactiae serotype Ia (strain ATCC 27591 / A909 / CDC SS700), this protein is DNA mismatch repair protein MutS.